A 325-amino-acid polypeptide reads, in one-letter code: uncharacterized protein (325 aa).

The segment at 296–325 is disordered; that stretch reads QRTLSSSMEEADRPRRMSVTQPHLPPVPSA.

The protein belongs to the NDRG family.

This is an uncharacterized protein from Caenorhabditis elegans.